The primary structure comprises 252 residues: Imidazole glycerol phosphate synthase subunit HisF (252 aa).

Active-site residues include Asp-13 and Asp-132.

This sequence belongs to the HisA/HisF family. As to quaternary structure, heterodimer of HisH and HisF.

The protein resides in the cytoplasm. The enzyme catalyses 5-[(5-phospho-1-deoxy-D-ribulos-1-ylimino)methylamino]-1-(5-phospho-beta-D-ribosyl)imidazole-4-carboxamide + L-glutamine = D-erythro-1-(imidazol-4-yl)glycerol 3-phosphate + 5-amino-1-(5-phospho-beta-D-ribosyl)imidazole-4-carboxamide + L-glutamate + H(+). It functions in the pathway amino-acid biosynthesis; L-histidine biosynthesis; L-histidine from 5-phospho-alpha-D-ribose 1-diphosphate: step 5/9. Its function is as follows. IGPS catalyzes the conversion of PRFAR and glutamine to IGP, AICAR and glutamate. The HisF subunit catalyzes the cyclization activity that produces IGP and AICAR from PRFAR using the ammonia provided by the HisH subunit. This chain is Imidazole glycerol phosphate synthase subunit HisF, found in Campylobacter hominis (strain ATCC BAA-381 / DSM 21671 / CCUG 45161 / LMG 19568 / NCTC 13146 / CH001A).